The chain runs to 103 residues: N(4)-acetylcytidine amidohydrolase (103 aa).

Positions 6-94 constitute an ASCH domain; it reads ITFFQRFQND…IAEIYPNQTQ (89 aa). The Proton acceptor role is filled by K21. The active-site Nucleophile is the T24. Catalysis depends on E74, which acts as the Proton donor.

Belongs to the N(4)-acetylcytidine amidohydrolase family.

It catalyses the reaction N(4)-acetylcytidine + H2O = cytidine + acetate + H(+). The catalysed reaction is N(4)-acetyl-2'-deoxycytidine + H2O = 2'-deoxycytidine + acetate + H(+). The enzyme catalyses N(4)-acetylcytosine + H2O = cytosine + acetate + H(+). Its function is as follows. Catalyzes the hydrolysis of N(4)-acetylcytidine (ac4C). This chain is N(4)-acetylcytidine amidohydrolase (yqfB), found in Salmonella schwarzengrund (strain CVM19633).